Here is a 219-residue protein sequence, read N- to C-terminus: U-scoloptoxin(11)-Sm7a (219 aa).

An N-terminal signal peptide occupies residues 1–15 (MYLFLMINYFVLANS).

It belongs to the scoloptoxin-11 family. Contains 8 disulfide bonds. In terms of tissue distribution, expressed by the venom gland.

The protein localises to the secreted. The sequence is that of U-scoloptoxin(11)-Sm7a from Scolopendra morsitans (Tanzanian blue ringleg centipede).